The chain runs to 294 residues: N-acetylmuramic acid 6-phosphate etherase (294 aa).

Positions 54-217 (VIKSFEEEGR…STASMIGVGK (164 aa)) constitute an SIS domain. The Proton donor role is filled by E82. Residue E113 is part of the active site.

Belongs to the GCKR-like family. MurNAc-6-P etherase subfamily. Homodimer.

The enzyme catalyses N-acetyl-D-muramate 6-phosphate + H2O = N-acetyl-D-glucosamine 6-phosphate + (R)-lactate. It functions in the pathway amino-sugar metabolism; N-acetylmuramate degradation. Functionally, specifically catalyzes the cleavage of the D-lactyl ether substituent of MurNAc 6-phosphate, producing GlcNAc 6-phosphate and D-lactate. This chain is N-acetylmuramic acid 6-phosphate etherase, found in Bacillus cereus (strain ATCC 10987 / NRS 248).